The following is a 1699-amino-acid chain: Cilia- and flagella-associated protein 61 (1699 aa).

A compositionally biased stretch (polar residues) spans 1-22; sequence MYSNNQLDNPNHSRSQYRNGDQ. 3 disordered regions span residues 1 to 23, 489 to 515, and 1340 to 1365; these read MYSNNQLDNPNHSRSQYRNGDQS, QLKRPQKKVTKRPKRQKEEDKKEDEFK, and ERDANSENADKGFDDTQSRDGDEENQ. Over residues 489–503 the composition is skewed to basic residues; it reads QLKRPQKKVTKRPKR. Basic and acidic residues-rich tracts occupy residues 504–515 and 1340–1359; these read QKEEDKKEDEFK and ERDANSENADKGFDDTQSRD.

The protein resides in the cell projection. It localises to the cilium. Its function is as follows. As component of a spoke-associated complex, regulates ciliary mobility by mediating a stable and functional assembly of the radial spoke 3 (RS3). This chain is Cilia- and flagella-associated protein 61, found in Tetrahymena thermophila (strain SB210).